Consider the following 181-residue polypeptide: Protein Syd (181 aa).

The protein belongs to the Syd family.

It is found in the cell inner membrane. Functionally, interacts with the SecY protein in vivo. May bind preferentially to an uncomplexed state of SecY, thus functioning either as a chelating agent for excess SecY in the cell or as a regulatory factor that negatively controls the translocase function. The protein is Protein Syd of Shigella flexneri serotype 5b (strain 8401).